Reading from the N-terminus, the 415-residue chain is Serine--tRNA ligase (415 aa).

231–233 (TAE) lines the L-serine pocket. Residue 262-264 (RSE) coordinates ATP. E285 contributes to the L-serine binding site. An ATP-binding site is contributed by 349–352 (EISS). S383 contacts L-serine.

It belongs to the class-II aminoacyl-tRNA synthetase family. Type-1 seryl-tRNA synthetase subfamily. As to quaternary structure, homodimer. The tRNA molecule binds across the dimer.

It localises to the cytoplasm. The enzyme catalyses tRNA(Ser) + L-serine + ATP = L-seryl-tRNA(Ser) + AMP + diphosphate + H(+). It carries out the reaction tRNA(Sec) + L-serine + ATP = L-seryl-tRNA(Sec) + AMP + diphosphate + H(+). It participates in aminoacyl-tRNA biosynthesis; selenocysteinyl-tRNA(Sec) biosynthesis; L-seryl-tRNA(Sec) from L-serine and tRNA(Sec): step 1/1. In terms of biological role, catalyzes the attachment of serine to tRNA(Ser). Is also able to aminoacylate tRNA(Sec) with serine, to form the misacylated tRNA L-seryl-tRNA(Sec), which will be further converted into selenocysteinyl-tRNA(Sec). The sequence is that of Serine--tRNA ligase from Helicobacter pylori (strain G27).